The chain runs to 332 residues: MNLLNLPKIELHCHLDGSLRVETAIELAKKEGVKLDSYEYDKVKELLVIPKECNSLEDYLNRFALPVKLLQRAENLERVAFELMEDASKENVKYIEIRFAPLLHLEKGMTQKEVIESVIKGIRKAEELYDIKGNLILSCLRHHSIDSVYEVIEEGKNFIGKGVVAIDLAGGELEGFVKPYEEVMKLARESGFRVTIHAGETGYGKNVRDAIELLGAERIGHGLFIFNDEEAYNLVKEKGVTLEMCPKSNIDTKGVNKYEDHPIYKYHKDNIRVNLSTDNRTVSNINLTEEFENVHKTFNIDFEDYKKIYLNSVEASFCSEELKEKLKLSIII.

The Zn(2+) site is built by His-12 and His-14. Substrate is bound by residues His-14, Asp-16, and Gly-170. Position 197 (His-197) interacts with Zn(2+). Glu-200 (proton donor) is an active-site residue. Zn(2+) is bound at residue Asp-278.

The protein belongs to the metallo-dependent hydrolases superfamily. Adenosine and AMP deaminases family. Adenosine deaminase subfamily. Zn(2+) serves as cofactor.

The catalysed reaction is adenosine + H2O + H(+) = inosine + NH4(+). It carries out the reaction 2'-deoxyadenosine + H2O + H(+) = 2'-deoxyinosine + NH4(+). Functionally, catalyzes the hydrolytic deamination of adenosine and 2-deoxyadenosine. This Clostridium perfringens (strain 13 / Type A) protein is Adenosine deaminase.